The following is a 142-amino-acid chain: Small ribosomal subunit protein uS12 (142 aa).

The protein belongs to the universal ribosomal protein uS12 family. Part of the 30S ribosomal subunit.

Its function is as follows. With S4 and S5 plays an important role in translational accuracy. Located at the interface of the 30S and 50S subunits. The polypeptide is Small ribosomal subunit protein uS12 (Methanosarcina mazei (strain ATCC BAA-159 / DSM 3647 / Goe1 / Go1 / JCM 11833 / OCM 88) (Methanosarcina frisia)).